Reading from the N-terminus, the 211-residue chain is Ribosomal RNA small subunit methyltransferase G (211 aa).

S-adenosyl-L-methionine contacts are provided by residues glycine 78, methionine 83, 129 to 130 (AE), and arginine 144.

This sequence belongs to the methyltransferase superfamily. RNA methyltransferase RsmG family.

The protein localises to the cytoplasm. It catalyses the reaction guanosine(527) in 16S rRNA + S-adenosyl-L-methionine = N(7)-methylguanosine(527) in 16S rRNA + S-adenosyl-L-homocysteine. Functionally, specifically methylates the N7 position of guanine in position 527 of 16S rRNA. The sequence is that of Ribosomal RNA small subunit methyltransferase G from Pseudomonas syringae pv. tomato (strain ATCC BAA-871 / DC3000).